The sequence spans 219 residues: C-8 sterol isomerase erg2 (219 aa).

Residues 1–21 (MKLTKFLTVFIPFIAGLIYYI) traverse the membrane as a helical segment.

This sequence belongs to the ERG2 family.

It is found in the endoplasmic reticulum membrane. The catalysed reaction is fecosterol = episterol. It participates in steroid metabolism; ergosterol biosynthesis. In terms of biological role, C-8 sterol isomerase; part of the third module of ergosterol biosynthesis pathway that includes by the late steps of the pathway. Erg2 catalyzes the reaction which results in unsaturation at C-7 in the B ring of sterols and thus converts fecosterol to episterol. The third module or late pathway involves the ergosterol synthesis itself through consecutive reactions that mainly occur in the endoplasmic reticulum (ER) membrane. Firstly, the squalene synthase erg9 catalyzes the condensation of 2 farnesyl pyrophosphate moieties to form squalene, which is the precursor of all steroids. Secondly, squalene is converted into lanosterol by the consecutive action of the squalene epoxidase erg1 and the lanosterol synthase erg7. The lanosterol 14-alpha-demethylase erg11/cyp1 catalyzes C14-demethylation of lanosterol to produce 4,4'-dimethyl cholesta-8,14,24-triene-3-beta-ol. In the next steps, a complex process involving various demethylation, reduction and desaturation reactions catalyzed by the C-14 reductase erg24 and the C-4 demethylation complex erg25-erg26-erg27 leads to the production of zymosterol. Erg28 likely functions in the C-4 demethylation complex reaction by tethering erg26 and Erg27 to the endoplasmic reticulum or to facilitate interaction between these proteins. Then, the sterol 24-C-methyltransferase erg6 catalyzes the methyl transfer from S-adenosyl-methionine to the C-24 of zymosterol to form fecosterol. The C-8 sterol isomerase erg2 catalyzes the reaction which results in unsaturation at C-7 in the B ring of sterols and thus converts fecosterol to episterol. The sterol-C5-desaturases erg31 and erg32 then catalyze the introduction of a C-5 double bond in the B ring to produce 5-dehydroepisterol. The C-22 sterol desaturase erg5 further converts 5-dehydroepisterol into ergosta-5,7,22,24(28)-tetraen-3beta-ol by forming the C-22(23) double bond in the sterol side chain. Finally, ergosta-5,7,22,24(28)-tetraen-3beta-ol is substrate of the C-24(28) sterol reductase erg4 to produce ergosterol. In the genus Schizosaccharomyces, a second route exists between lanosterol and fecosterol, via the methylation of lanosterol to eburicol by erg6, followed by C14-demethylation by erg11/cyp1 and C4-demethylation by the demethylation complex erg25-erg26-erg27. The sequence is that of C-8 sterol isomerase erg2 from Schizosaccharomyces pombe (strain 972 / ATCC 24843) (Fission yeast).